Here is a 231-residue protein sequence, read N- to C-terminus: DNA mismatch repair protein MutH (231 aa).

Belongs to the MutH family.

The protein localises to the cytoplasm. In terms of biological role, sequence-specific endonuclease that cleaves unmethylated GATC sequences. It is involved in DNA mismatch repair. The protein is DNA mismatch repair protein MutH of Shewanella woodyi (strain ATCC 51908 / MS32).